The chain runs to 87 residues: Putative regulatory protein GK1166 (87 aa).

Belongs to the RemA family.

The protein is Putative regulatory protein GK1166 of Geobacillus kaustophilus (strain HTA426).